A 71-amino-acid polypeptide reads, in one-letter code: Vitellogenin-B1 (71 aa).

An N-terminal signal peptide occupies residues 1-15; the sequence is MRGIILAQLLALAGS. The 48-residue stretch at 24–71 folds into the Vitellogenin domain; that stretch reads FSESKPYVYNYEGIILNGIPENGLARSGIKLNCKAEISGYAQRSYMLK.

As to expression, produced by the liver, secreted into the blood and then sequestered by receptor mediated endocytosis into growing oocytes, where it is generally cleaved, giving rise to the respective yolk components.

In terms of biological role, precursor of the major egg-yolk proteins that are sources of nutrients during early development of oviparous organisms. The polypeptide is Vitellogenin-B1 (Xenopus laevis (African clawed frog)).